We begin with the raw amino-acid sequence, 376 residues long: Thymidine kinase (376 aa).

The segment at 1–39 (MASYPCHQHASAFDQAARSRGHSNRRTALRPRRQQEATE) is disordered. Positions 19–32 (SRGHSNRRTALRPR) are enriched in basic residues. 56-63 (GPHGMGKT) contacts ATP. Glu-83 serves as the catalytic Proton acceptor. 2 residues coordinate substrate: Tyr-101 and Gln-125. Arg-216 serves as a coordination point for ATP. Arg-222 is a substrate binding site. The tract at residues 260 to 280 (GQLSGTAVPPQGAEPQSNAGP) is disordered.

It belongs to the herpesviridae thymidine kinase family. Homodimer.

The catalysed reaction is thymidine + ATP = dTMP + ADP + H(+). In terms of biological role, catalyzes the transfer of the gamma-phospho group of ATP to thymidine to generate dTMP in the salvage pathway of pyrimidine synthesis. The dTMP serves as a substrate for DNA polymerase during viral DNA replication. Allows the virus to be reactivated and to grow in non-proliferative cells lacking a high concentration of phosphorylated nucleic acid precursors. The chain is Thymidine kinase from Human herpesvirus 1 (strain KOS) (HHV-1).